The chain runs to 212 residues: Nitrile hydratase subunit beta (212 aa).

This sequence belongs to the nitrile hydratase subunit beta family. As to quaternary structure, heterodimer of an alpha and a beta chain.

The catalysed reaction is an aliphatic primary amide = an aliphatic nitrile + H2O. NHase catalyzes the hydration of various nitrile compounds to the corresponding amides. This is Nitrile hydratase subunit beta (nthB) from Rhodococcus erythropolis (Arthrobacter picolinophilus).